A 116-amino-acid polypeptide reads, in one-letter code: uncharacterized protein (116 aa).

The tract at residues 76-116 is disordered; sequence VPPPRYSYIRSESSRNNLRNSARNQPQNLVSEQDSDSNREN. Low complexity predominate over residues 85–99; sequence RSESSRNNLRNSARN.

This is an uncharacterized protein from Glycine max (Soybean).